Reading from the N-terminus, the 901-residue chain is MLIKLLTKVFGSSNDRTLRRMRKAVEQINKMEPDFVKLSDDELKAKTIEFRARLEKGEELEALIPEAFATVREASKRVFGMRHFDVQLLGGMVLNDRCIAEMRTGEGKTLTATLPAYLNALSGKGVHVVTVNDYLAQRDAENNRALFEFLGLSIGINLPGLPAPAKREAYAADITYGTNNEYGFDYLRDNMAFSPEERVQRKLNYALVDEVDSILIDEARTPLIISGPAEDSSELYIKVNKIIPNLIRQEKEDSDSFQGEGHFSVDEKARQVHLTERGLVAVEELMVSEGIMAEGESLYSPGNIMMMHHVTAALRAHVLFTRDVDYIVKDGEVIIVDEHTGRTMQGRRWSDGLHQAVEAKEGVDIQNENQTLASITFQNYFRLYNKLAGMTGTADTEAFEFSSIYKLDTIVIPTNRPMVRKDLPDLVYMTEMEKIGAIIEDIRERTANGQPVLVGTISIEKSEVVSQELTRAGVKHEVLNAKFHAREADIVSQAGQPGAVTIATNMAGRGTDIVLGGSWQAEIAALEDASAEQIDAIKAAWKIRHDAVLASGGLHIIGTERHESRRIDNQLRGRSGRQGDHGSSRFYLSMEDALMRIFASDRVTNMMRKLGMKPGEAIEHPWVTKAIANAQRKVESRNFDIRKQLLEYDDVANDQRRAIYSQRNELLDVSDVSETIASIREDVYKTTIDSYIPPQSMEEMWDVAGLQERLSNDFDLTLPIADWLVAEPNLHEETLRERIMQQAQEQYQRKEEVVGVEMMRSFEKGVMLQTLDSLWKEHLAAMDYLRQGIHLRGYAQKDPKQEYKRESFAMFAAMLESLKYEVVSTLSKVQVRMPEEVEQMEEQRRQESERLAQQQQLSHVDAETEAAQSLAEQSGERKVGRNDPCPCGSGKKYKQCHGRLA.

ATP is bound by residues Gln-87, 105–109, and Asp-512; that span reads GEGKT. The tract at residues 839–901 is disordered; it reads QMEEQRRQES…KYKQCHGRLA (63 aa). Over residues 841–850 the composition is skewed to basic and acidic residues; the sequence is EEQRRQESER. Zn(2+)-binding residues include Cys-885, Cys-887, Cys-896, and His-897. Basic residues predominate over residues 891–901; that stretch reads KKYKQCHGRLA.

This sequence belongs to the SecA family. In terms of assembly, monomer and homodimer. Part of the essential Sec protein translocation apparatus which comprises SecA, SecYEG and auxiliary proteins SecDF-YajC and YidC. Zn(2+) is required as a cofactor.

It is found in the cell inner membrane. It localises to the cytoplasm. The catalysed reaction is ATP + H2O + cellular proteinSide 1 = ADP + phosphate + cellular proteinSide 2.. Its function is as follows. Part of the Sec protein translocase complex. Interacts with the SecYEG preprotein conducting channel. Has a central role in coupling the hydrolysis of ATP to the transfer of proteins into and across the cell membrane, serving both as a receptor for the preprotein-SecB complex and as an ATP-driven molecular motor driving the stepwise translocation of polypeptide chains across the membrane. This Erwinia tasmaniensis (strain DSM 17950 / CFBP 7177 / CIP 109463 / NCPPB 4357 / Et1/99) protein is Protein translocase subunit SecA.